The primary structure comprises 217 residues: Probable GTP-binding protein EngB (217 aa).

In terms of domain architecture, EngB-type G spans 29 to 213 (GPLEVAFAGR…RQAIAETVGI (185 aa)). Residues 37 to 44 (GRSNVGKS), 64 to 68 (GRTQE), 91 to 94 (DMPG), 158 to 161 (TKTD), and 192 to 194 (TSS) contribute to the GTP site. Residues serine 44 and threonine 66 each contribute to the Mg(2+) site.

It belongs to the TRAFAC class TrmE-Era-EngA-EngB-Septin-like GTPase superfamily. EngB GTPase family. It depends on Mg(2+) as a cofactor.

Its function is as follows. Necessary for normal cell division and for the maintenance of normal septation. This chain is Probable GTP-binding protein EngB, found in Rhizobium johnstonii (strain DSM 114642 / LMG 32736 / 3841) (Rhizobium leguminosarum bv. viciae).